We begin with the raw amino-acid sequence, 684 residues long: Pentatricopeptide repeat-containing protein At4g14850 (684 aa).

PPR repeat units lie at residues 5–39 (SADA…LDSP), 41–71 (PPFL…TPAR), 72–106 (NVVS…GVVP), 107–141 (NDFT…GRIL), 142–172 (DVFV…IPER), 173–207 (NLET…DGHP), 208–242 (NSIT…GFDT), 243–277 (DVSV…NAVS), 278–308 (WCSL…IVET), 309–343 (SDFM…CVER), 344–374 (TIFV…MPEK), 375–409 (NLVT…GCGP), 412–442 (NYMT…MRST), and 448–478 (GAEH…MPIQ). The tract at residues 483–558 (VWGALQNACR…GAGYSWITVK (76 aa)) is type E motif; degenerate. The type E(+) motif; degenerate stretch occupies residues 559–589 (NQVHAFQAKDRSHILNKEIQTTLAKLRNEME). The segment at 590–684 (AAGYKPDLKL…DGICSCKDYW (95 aa)) is type DYW motif.

It belongs to the PPR family. PCMP-H subfamily.

In terms of biological role, acts as a regulatory factor of isoprenoid biosynthesis. Could bind RNA. This chain is Pentatricopeptide repeat-containing protein At4g14850 (LOI1), found in Arabidopsis thaliana (Mouse-ear cress).